We begin with the raw amino-acid sequence, 176 residues long: Large ribosomal subunit protein uL10 (176 aa).

This sequence belongs to the universal ribosomal protein uL10 family. As to quaternary structure, part of the ribosomal stalk of the 50S ribosomal subunit. The N-terminus interacts with L11 and the large rRNA to form the base of the stalk. The C-terminus forms an elongated spine to which L12 dimers bind in a sequential fashion forming a multimeric L10(L12)X complex.

Its function is as follows. Forms part of the ribosomal stalk, playing a central role in the interaction of the ribosome with GTP-bound translation factors. The polypeptide is Large ribosomal subunit protein uL10 (Leuconostoc citreum (strain KM20)).